Reading from the N-terminus, the 493-residue chain is Cholesteryl ester transfer protein (493 aa).

A signal peptide spans 1–17 (MLAATVLTLALLGNAHA). An N-linked (GlcNAc...) (complex) asparagine glycan is attached at Asn-105. A disulfide bridge links Cys-160 with Cys-201. 3 N-linked (GlcNAc...) asparagine glycosylation sites follow: Asn-257, Asn-358, and Asn-413.

It belongs to the BPI/LBP/Plunc superfamily. BPI/LBP family. Expressed by the liver and secreted in plasma.

Its subcellular location is the secreted. The enzyme catalyses cholesteryl (9Z-octadecenoate)(in) = cholesteryl (9Z-octadecenoate)(out). It carries out the reaction 1,2,3-tri-(9Z-octadecenoyl)-glycerol(in) = 1,2,3-tri-(9Z-octadecenoyl)-glycerol(out). The catalysed reaction is cholesteryl (9Z,12Z)-octadecadienoate(in) = cholesteryl (9Z,12Z)-octadecadienoate(out). Involved in the transfer of neutral lipids, including cholesteryl ester and triglyceride, among lipoprotein particles. Allows the net movement of cholesteryl ester from high density lipoproteins/HDL to triglyceride-rich very low density lipoproteins/VLDL, and the equimolar transport of triglyceride from VLDL to HDL. Regulates the reverse cholesterol transport, by which excess cholesterol is removed from peripheral tissues and returned to the liver for elimination. This chain is Cholesteryl ester transfer protein, found in Homo sapiens (Human).